The primary structure comprises 236 residues: Small ribosomal subunit protein bS21m (236 aa).

A disordered region spans residues Lys-65–Trp-136. Residues Ser-107–Ser-131 show a composition bias toward low complexity.

It belongs to the bacterial ribosomal protein bS21 family. In terms of assembly, component of the mitochondrial small ribosomal subunit (mt-SSU). Mature N.crassa 74S mitochondrial ribosomes consist of a small (37S) and a large (54S) subunit. The 37S small subunit contains a 16S ribosomal RNA (16S mt-rRNA) and 32 different proteins. The 54S large subunit contains a 23S rRNA (23S mt-rRNA) and 42 different proteins.

The protein localises to the mitochondrion. In terms of biological role, component of the mitochondrial ribosome (mitoribosome), a dedicated translation machinery responsible for the synthesis of mitochondrial genome-encoded proteins, including at least some of the essential transmembrane subunits of the mitochondrial respiratory chain. The mitoribosomes are attached to the mitochondrial inner membrane and translation products are cotranslationally integrated into the membrane. In Neurospora crassa (strain ATCC 24698 / 74-OR23-1A / CBS 708.71 / DSM 1257 / FGSC 987), this protein is Small ribosomal subunit protein bS21m (mrp21).